The chain runs to 780 residues: Neutral ceramidase (780 aa).

At 1-12 (MAKRTFSNLETF) the chain is on the cytoplasmic side. Residues 13–33 (LIFLLVMMSAITVALLSLLFI) traverse the membrane as a helical; Signal-anchor for type II membrane protein segment. The Lumenal portion of the chain corresponds to 34-780 (TSGTIENHKD…TSPAFEVVTI (747 aa)). Residues 47 to 90 (HFFSTTQSPPATQGSTAAQRSTATQHSTATQSSTATQTSPVPLT) form a disordered region. A compositionally biased stretch (low complexity) spans 57 to 85 (ATQGSTAAQRSTATQHSTATQSSTATQTS). The O-linked (GalNAc...) threonine glycan is linked to T62. A glycan (O-linked (GalNAc...) serine) is linked at S67. O-linked (GalNAc...) threonine glycans are attached at residues T68 and T70. S73 carries O-linked (GalNAc...) serine glycosylation. O-linked (GalNAc...) threonine glycosylation is found at T74 and T76. Residues S78 and S79 are each glycosylated (O-linked (GalNAc...) serine). T80, T82, and T84 each carry an O-linked (GalNAc...) threonine glycan. N98 carries an N-linked (GlcNAc...) asparagine glycan. L134 provides a ligand contact to Ca(2+). Residue N151 is glycosylated (N-linked (GlcNAc...) asparagine). H194 contributes to the Zn(2+) binding site. A glycan (N-linked (GlcNAc...) asparagine) is linked at N217. Position 303 (H303) interacts with Zn(2+). N308 carries N-linked (GlcNAc...) asparagine glycosylation. Catalysis depends on S354, which acts as the Nucleophile. 2 disulfide bridges follow: C362/C376 and C369/C384. N-linked (GlcNAc...) asparagine glycans are attached at residues N440 and N468. A disulfide bond links C448 and C498. Residue E540 coordinates Zn(2+). N564 carries N-linked (GlcNAc...) asparagine glycosylation. A Zn(2+)-binding site is contributed by Y579. Residues D712, S714, and T717 each coordinate Ca(2+). An N-linked (GlcNAc...) asparagine glycan is attached at N730. The interval 770-780 (GTSPAFEVVTI) is required for correct folding and localization. T779 is a glycosylation site (O-linked (GalNAc...) threonine).

The protein belongs to the neutral ceramidase family. Zn(2+) is required as a cofactor. In terms of processing, proteolytic cleavage of the N-terminus removes the signal-anchor and produces a soluble form of the protein. Post-translationally, N-glycosylated. Required for enzyme activity. O-glycosylated. Required to retain it as a type II membrane protein at the cell surface. In terms of processing, phosphorylated. May prevent ubiquitination and subsequent degradation. Post-translationally, ubiquitinated, leading to its degradation by the proteasome. Ubiquitination is triggered by nitric oxide. In terms of tissue distribution, primarily expressed in intestine. Ubiquitously expressed with higher levels in kidney, skeletal muscle and heart. The ubiquitous expression observed for ASAH2 might be an experimental artifact due to the paralog ASAH2B.

Its subcellular location is the cell membrane. The protein localises to the membrane raft. It localises to the membrane. It is found in the caveola. The protein resides in the golgi apparatus membrane. Its subcellular location is the mitochondrion. The protein localises to the secreted. It localises to the extracellular exosome. It carries out the reaction an N-acylsphing-4-enine + H2O = sphing-4-enine + a fatty acid. The enzyme catalyses N-dodecanoylsphing-4-enine + H2O = dodecanoate + sphing-4-enine. It catalyses the reaction N-hexadecanoylsphing-4-enine + H2O = sphing-4-enine + hexadecanoate. The catalysed reaction is N-octanoylsphing-4-enine + H2O = octanoate + sphing-4-enine. It carries out the reaction N-(hexanoyl)sphing-4-enine + H2O = hexanoate + sphing-4-enine. The enzyme catalyses N-octadecanoylsphing-4-enine + H2O = sphing-4-enine + octadecanoate. It catalyses the reaction N-tetradecanoylsphing-4-enine + H2O = tetradecanoate + sphing-4-enine. The catalysed reaction is N-(9Z-octadecenoyl)-sphing-4-enine + H2O = sphing-4-enine + (9Z)-octadecenoate. It carries out the reaction N-(15Z-tetracosenoyl)-sphing-4-enine + H2O = (15Z)-tetracosenoate + sphing-4-enine. The enzyme catalyses sphinganine + hexadecanoate = N-hexadecanoylsphinganine + H2O. It catalyses the reaction N-(octadecanoyl)-sphinganine + H2O = sphinganine + octadecanoate. It participates in lipid metabolism; sphingolipid metabolism. Its activity is regulated as follows. Inhibited by dithiothreitol (DTT) and 2-mercaptoethanol. Activity is mildly stimulated by Ca(2+) and Mg(2+), but is not inhibited by EDTA. Activity is inhibited by millimolar levels of Fe(2+), Zn(2+) and Cu(2+). Inhibited by cholesterol. Plasma membrane ceramidase that hydrolyzes sphingolipid ceramides into sphingosine and free fatty acids at neutral pH. Ceramides, sphingosine, and its phosphorylated form sphingosine-1-phosphate are bioactive lipids that mediate cellular signaling pathways regulating several biological processes including cell proliferation, apoptosis and differentiation. Also catalyzes the reverse reaction allowing the synthesis of ceramides from fatty acids and sphingosine. Together with sphingomyelinase, participates in the production of sphingosine and sphingosine-1-phosphate from the degradation of sphingomyelin, a sphingolipid enriched in the plasma membrane of cells. Also participates in the hydrolysis of ceramides from the extracellular milieu allowing the production of sphingosine-1-phosphate inside and outside cells. This is the case for instance with the digestion of dietary sphingolipids in the intestinal tract. The sequence is that of Neutral ceramidase (ASAH2) from Homo sapiens (Human).